The sequence spans 1411 residues: DNA-directed RNA polymerase subunit beta' (1411 aa).

Zn(2+)-binding residues include cysteine 70, cysteine 72, cysteine 85, and cysteine 88. Mg(2+) contacts are provided by aspartate 460, aspartate 462, and aspartate 464. Positions 814, 889, 896, and 899 each coordinate Zn(2+). The span at 1387–1399 (RSTSSGTEITSPS) shows a compositional bias: polar residues. Residues 1387-1411 (RSTSSGTEITSPSKDAIPLGSKVGF) are disordered.

It belongs to the RNA polymerase beta' chain family. The RNAP catalytic core consists of 2 alpha, 1 beta, 1 beta' and 1 omega subunit. When a sigma factor is associated with the core the holoenzyme is formed, which can initiate transcription. The cofactor is Mg(2+). Zn(2+) serves as cofactor.

It catalyses the reaction RNA(n) + a ribonucleoside 5'-triphosphate = RNA(n+1) + diphosphate. DNA-dependent RNA polymerase catalyzes the transcription of DNA into RNA using the four ribonucleoside triphosphates as substrates. The polypeptide is DNA-directed RNA polymerase subunit beta' (Xylella fastidiosa (strain M12)).